We begin with the raw amino-acid sequence, 417 residues long: Serine hydroxymethyltransferase (417 aa).

Residues Leu-120 and 124–126 (GHL) each bind (6S)-5,6,7,8-tetrahydrofolate. N6-(pyridoxal phosphate)lysine is present on Lys-229.

The protein belongs to the SHMT family. In terms of assembly, homodimer. The cofactor is pyridoxal 5'-phosphate.

It is found in the cytoplasm. The catalysed reaction is (6R)-5,10-methylene-5,6,7,8-tetrahydrofolate + glycine + H2O = (6S)-5,6,7,8-tetrahydrofolate + L-serine. It functions in the pathway one-carbon metabolism; tetrahydrofolate interconversion. The protein operates within amino-acid biosynthesis; glycine biosynthesis; glycine from L-serine: step 1/1. In terms of biological role, catalyzes the reversible interconversion of serine and glycine with tetrahydrofolate (THF) serving as the one-carbon carrier. This reaction serves as the major source of one-carbon groups required for the biosynthesis of purines, thymidylate, methionine, and other important biomolecules. Also exhibits THF-independent aldolase activity toward beta-hydroxyamino acids, producing glycine and aldehydes, via a retro-aldol mechanism. In Anaeromyxobacter sp. (strain Fw109-5), this protein is Serine hydroxymethyltransferase.